Reading from the N-terminus, the 931-residue chain is Isoleucine--tRNA ligase (931 aa).

A 'HIGH' region motif is present at residues 58-68 (PYANGHLHCGH). L-isoleucyl-5'-AMP is bound at residue Glu-559. Residues 600 to 604 (KLSKS) carry the 'KMSKS' region motif. Lys-603 is an ATP binding site. The Zn(2+) site is built by Cys-894, Cys-897, Cys-914, and Cys-917.

The protein belongs to the class-I aminoacyl-tRNA synthetase family. IleS type 1 subfamily. Monomer. Requires Zn(2+) as cofactor.

It localises to the cytoplasm. The enzyme catalyses tRNA(Ile) + L-isoleucine + ATP = L-isoleucyl-tRNA(Ile) + AMP + diphosphate. Functionally, catalyzes the attachment of isoleucine to tRNA(Ile). As IleRS can inadvertently accommodate and process structurally similar amino acids such as valine, to avoid such errors it has two additional distinct tRNA(Ile)-dependent editing activities. One activity is designated as 'pretransfer' editing and involves the hydrolysis of activated Val-AMP. The other activity is designated 'posttransfer' editing and involves deacylation of mischarged Val-tRNA(Ile). The polypeptide is Isoleucine--tRNA ligase (Legionella pneumophila (strain Lens)).